The sequence spans 181 residues: Acireductone dioxygenase (181 aa).

Fe(2+) is bound by residues histidine 100, histidine 102, glutamate 106, and histidine 145. 4 residues coordinate Ni(2+): histidine 100, histidine 102, glutamate 106, and histidine 145.

Belongs to the acireductone dioxygenase (ARD) family. As to quaternary structure, monomer. Requires Fe(2+) as cofactor. It depends on Ni(2+) as a cofactor.

It carries out the reaction 1,2-dihydroxy-5-(methylsulfanyl)pent-1-en-3-one + O2 = 3-(methylsulfanyl)propanoate + CO + formate + 2 H(+). The enzyme catalyses 1,2-dihydroxy-5-(methylsulfanyl)pent-1-en-3-one + O2 = 4-methylsulfanyl-2-oxobutanoate + formate + 2 H(+). Its pathway is amino-acid biosynthesis; L-methionine biosynthesis via salvage pathway; L-methionine from S-methyl-5-thio-alpha-D-ribose 1-phosphate: step 5/6. Functionally, catalyzes 2 different reactions between oxygen and the acireductone 1,2-dihydroxy-3-keto-5-methylthiopentene (DHK-MTPene) depending upon the metal bound in the active site. Fe-containing acireductone dioxygenase (Fe-ARD) produces formate and 2-keto-4-methylthiobutyrate (KMTB), the alpha-ketoacid precursor of methionine in the methionine recycle pathway. Ni-containing acireductone dioxygenase (Ni-ARD) produces methylthiopropionate, carbon monoxide and formate, and does not lie on the methionine recycle pathway. The protein is Acireductone dioxygenase of Trichodesmium erythraeum (strain IMS101).